Consider the following 297-residue polypeptide: TATA-box-binding protein (297 aa).

The segment at glutamate 52–serine 116 is disordered. Composition is skewed to low complexity over residues arginine 56 to glutamine 78 and methionine 104 to serine 114. Repeat copies occupy residues leucine 123 to valine 199 and isoleucine 213 to leucine 290.

It belongs to the TBP family. As to quaternary structure, belongs to the TFIID complex together with the TBP-associated factors (TAFs). Binds DNA as monomer. The N-terminal domain is extensively phosphorylated.

The protein resides in the nucleus. In terms of biological role, general transcription factor that functions at the core of the DNA-binding multiprotein factor TFIID. Binding of TFIID to the TATA box is the initial transcriptional step of the pre-initiation complex (PIC), playing a role in the activation of eukaryotic genes transcribed by RNA polymerase II. Members of the TBP family are differentially required to regulate transcription and development during early embryogenesis. Binds to the promoters of select genes. This chain is TATA-box-binding protein, found in Xenopus tropicalis (Western clawed frog).